Consider the following 426-residue polypeptide: Histidine--tRNA ligase (426 aa).

Belongs to the class-II aminoacyl-tRNA synthetase family. As to quaternary structure, homodimer.

It is found in the cytoplasm. The enzyme catalyses tRNA(His) + L-histidine + ATP = L-histidyl-tRNA(His) + AMP + diphosphate + H(+). The chain is Histidine--tRNA ligase from Streptococcus agalactiae serotype III (strain NEM316).